A 210-amino-acid chain; its full sequence is Na(+)-translocating NADH-quinone reductase subunit D (210 aa).

Transmembrane regions (helical) follow at residues 11-31 (ILAPVLDNNPIALQVLGVCSA), 42-62 (FVMTLAVMFVTAFSNLFVSLI), 70-90 (VRIIVQMAIIASLVIVVDQIL), 103-123 (VFVGLIITNCIVMGRAEAFAM), 131-151 (FIDGIGNGLGYGFVLITVGFF), and 178-198 (NGLMLLAPSAFFLIGFMIWAI).

It belongs to the NqrDE/RnfAE family. As to quaternary structure, composed of six subunits; NqrA, NqrB, NqrC, NqrD, NqrE and NqrF.

It localises to the cell inner membrane. It carries out the reaction a ubiquinone + n Na(+)(in) + NADH + H(+) = a ubiquinol + n Na(+)(out) + NAD(+). In terms of biological role, NQR complex catalyzes the reduction of ubiquinone-1 to ubiquinol by two successive reactions, coupled with the transport of Na(+) ions from the cytoplasm to the periplasm. NqrA to NqrE are probably involved in the second step, the conversion of ubisemiquinone to ubiquinol. The sequence is that of Na(+)-translocating NADH-quinone reductase subunit D from Vibrio anguillarum (Listonella anguillarum).